We begin with the raw amino-acid sequence, 257 residues long: Pyrroline-5-carboxylate reductase (257 aa).

The protein belongs to the pyrroline-5-carboxylate reductase family.

It localises to the cytoplasm. It carries out the reaction L-proline + NADP(+) = (S)-1-pyrroline-5-carboxylate + NADPH + 2 H(+). The enzyme catalyses L-proline + NAD(+) = (S)-1-pyrroline-5-carboxylate + NADH + 2 H(+). It participates in amino-acid biosynthesis; L-proline biosynthesis; L-proline from L-glutamate 5-semialdehyde: step 1/1. Its function is as follows. Catalyzes the reduction of 1-pyrroline-5-carboxylate (PCA) to L-proline. The protein is Pyrroline-5-carboxylate reductase of Helicobacter pylori (strain J99 / ATCC 700824) (Campylobacter pylori J99).